A 302-amino-acid chain; its full sequence is MKDMNQTSLAVEPSRAVVGALWMVLAGIAFSLLNVVTQWLTMKLAFPSASAAFWQYGFAFLFSLPFLKRLGLAAMRTHYPWRHLTRVVLAALGVEAWVAGLAAVPIWQAIALVMTSPFFIILGARLFLGERVGPARWAATAAGFTGAMIILQPWSDGIGWAALLPVLSALLWGASSLITKSLTGIERPETITVWLLVLLTPINGGLALAAGFAVPTGATLALFLLAGLLTAVAQYFLTLAYAAADAAYVQPFDDLKLPLNVLAGWLFFGYAPAGYLWLGAALILSASLFIMRNEMRRERKPA.

The next 8 membrane-spanning stretches (helical) occupy residues 16 to 36 (AVVGALWMVLAGIAFSLLNVV), 44 to 64 (LAFPSASAAFWQYGFAFLFSL), 87 to 107 (VVLAALGVEAWVAGLAAVPIW), 109 to 129 (AIALVMTSPFFIILGARLFLG), 158 to 178 (IGWAALLPVLSALLWGASSLI), 191 to 213 (ITVWLLVLLTPINGGLALAAGFA), 227 to 247 (GLLTAVAQYFLTLAYAAADAA), and 264 to 284 (GWLFFGYAPAGYLWLGAALIL). EamA domains follow at residues 30–151 (FSLL…MIIL) and 170–291 (LLWG…LFIM).

Belongs to the drug/metabolite transporter (DMT) superfamily. 10 TMS drug/metabolite exporter (DME) (TC 2.A.7.3) family.

The protein resides in the cell membrane. Transports riboflavin into the cell. Can also transport FMN and FAD. Required for normal nodule development during colonization of pea plant roots. This is Riboflavin transporter from Rhizobium johnstonii (strain DSM 114642 / LMG 32736 / 3841) (Rhizobium leguminosarum bv. viciae).